A 185-amino-acid polypeptide reads, in one-letter code: Acireductone dioxygenase (185 aa).

Residues 1–23 form a disordered region; it reads MSRLSIHPEGNTNATSPAEPLLE. Residues H102, H104, E108, and H146 each contribute to the Fe(2+) site. Ni(2+) contacts are provided by H102, H104, E108, and H146.

The protein belongs to the acireductone dioxygenase (ARD) family. Monomer. Fe(2+) serves as cofactor. Ni(2+) is required as a cofactor.

It carries out the reaction 1,2-dihydroxy-5-(methylsulfanyl)pent-1-en-3-one + O2 = 3-(methylsulfanyl)propanoate + CO + formate + 2 H(+). The enzyme catalyses 1,2-dihydroxy-5-(methylsulfanyl)pent-1-en-3-one + O2 = 4-methylsulfanyl-2-oxobutanoate + formate + 2 H(+). It functions in the pathway amino-acid biosynthesis; L-methionine biosynthesis via salvage pathway; L-methionine from S-methyl-5-thio-alpha-D-ribose 1-phosphate: step 5/6. Functionally, catalyzes 2 different reactions between oxygen and the acireductone 1,2-dihydroxy-3-keto-5-methylthiopentene (DHK-MTPene) depending upon the metal bound in the active site. Fe-containing acireductone dioxygenase (Fe-ARD) produces formate and 2-keto-4-methylthiobutyrate (KMTB), the alpha-ketoacid precursor of methionine in the methionine recycle pathway. Ni-containing acireductone dioxygenase (Ni-ARD) produces methylthiopropionate, carbon monoxide and formate, and does not lie on the methionine recycle pathway. This is Acireductone dioxygenase from Prochlorococcus marinus (strain MIT 9303).